Reading from the N-terminus, the 166-residue chain is Cytochrome P450 regulator dap1 (166 aa).

A helical membrane pass occupies residues threonine 4–tryptophan 21. A Cytochrome b5 heme-binding domain is found at aspartate 42–isoleucine 145. Serine 108 bears the Phosphoserine mark. Tyrosine 138 is a binding site for heme.

The protein belongs to the cytochrome b5 family. MAPR subfamily. As to quaternary structure, interacts with erg5 and erg11.

The protein localises to the endoplasmic reticulum. It localises to the membrane. Functionally, required for sterol biosynthesis. Functions as a positive regulator of cytochrome P450 enzymes erg5 and erg11. Function requires bound heme. The polypeptide is Cytochrome P450 regulator dap1 (dap1) (Schizosaccharomyces pombe (strain 972 / ATCC 24843) (Fission yeast)).